The sequence spans 860 residues: MQEQYRPEEIESKVQLHWDEKRTFEVTEDESKEKYYCLSMLPYPSGRLHMGHVRNYTIGDVIARYQRMLGKNVLQPIGWDAFGLPAEGAAVKNNTAPAPWTYDNIAYMKNQLKMLGFGYDWSRELATCTPEYYRWEQKFFTELYKKGLVYKKTSAVNWCPNDQTVLANEQVIDGCCWRCDTKVERKEIPQWFIKITAYADELLNDLDKLDHWPDTVKTMQRNWIGRSEGVEITFNVNDYDNTLTVYTTRPDTFMGCSYLAVAAGHPLAQKAAENNPELAAFIDECRNTKVAEAEMATMEKKGVDTGFKAVHPLTGEEIPVWAANFVLMEYGTGAVMAVPGHDQRDYEFASKYGLNIKPVILAADGSEPDLSQQALTEKGVLFNSGEFNGLDHEAAFNAIADKLTAMGVGERKVNYRLRDWGVSRQRYWGAPIPMVTLEDGTVMPTPDDQLPVILPEDVVMDGITSPIKADPEWAKTTVNGMPALRETDTFDTFMESSWYYARYTCPEYKEGMLDSKAANYWLPVDIYIGGIEHAIMHLLYFRFFHKLMRDAGMVNSDEPAKQLLCQGMVLADAFYYVGENGERNWVSPVDAIVERDEKGRIVKAKDAAGHELVYTGMSKMSKSKNNGIDPQVMVERYGADTVRLFMMFASPADMTLEWQESGVEGANRFLKRVWKLVYEHTAKGDVAALNVDALTEDQKALRRDVHKTIAKVTDDIGRRQTFNTAIAAIMELMNKLAKAPTDSEQDRALMQEALLAVIRMLNPFTPHICFTLWQELKGEGDIDNAPWPVADEKAMVEDSTLVVVQVNGKVRAKITVPVDATEEQVRERAGQEHLVAKYLDGVTVRKVIYVPGKLLNLVVG.

A 'HIGH' region motif is present at residues Pro-42–His-52. The short motif at Lys-619–Ser-623 is the 'KMSKS' region element. Lys-622 is a binding site for ATP.

It belongs to the class-I aminoacyl-tRNA synthetase family.

It is found in the cytoplasm. The catalysed reaction is tRNA(Leu) + L-leucine + ATP = L-leucyl-tRNA(Leu) + AMP + diphosphate. The sequence is that of Leucine--tRNA ligase from Escherichia coli (strain SMS-3-5 / SECEC).